Consider the following 479-residue polypeptide: Ribosomal RNA small subunit methyltransferase F (479 aa).

S-adenosyl-L-methionine is bound by residues 125–131 (AAAPGSK), Glu-149, Asp-176, and Asp-194. The Nucleophile role is filled by Cys-247.

Belongs to the class I-like SAM-binding methyltransferase superfamily. RsmB/NOP family.

Its subcellular location is the cytoplasm. The catalysed reaction is cytidine(1407) in 16S rRNA + S-adenosyl-L-methionine = 5-methylcytidine(1407) in 16S rRNA + S-adenosyl-L-homocysteine + H(+). Specifically methylates the cytosine at position 1407 (m5C1407) of 16S rRNA. This chain is Ribosomal RNA small subunit methyltransferase F, found in Escherichia coli (strain UTI89 / UPEC).